A 256-amino-acid chain; its full sequence is Probable ribosomal RNA small subunit methyltransferase A (256 aa).

6 residues coordinate S-adenosyl-L-methionine: His8, Leu10, Gly34, Glu55, Asp83, and Asn98.

It belongs to the class I-like SAM-binding methyltransferase superfamily. rRNA adenine N(6)-methyltransferase family. RsmA subfamily.

It localises to the cytoplasm. In terms of biological role, specifically dimethylates two adjacent adenosines in the loop of a conserved hairpin near the 3'-end of 16S rRNA in the 30S particle. May play a critical role in biogenesis of 30S subunits. The chain is Probable ribosomal RNA small subunit methyltransferase A from Methanospirillum hungatei JF-1 (strain ATCC 27890 / DSM 864 / NBRC 100397 / JF-1).